A 225-amino-acid polypeptide reads, in one-letter code: MAKGFNVAIDGPAGAGKSTVAKKTAEKLGFLYIDTGAMYRAITFAALAEGIDLHDGKALGKLLEKSELRLESSNEGTAVFWNGADITAAIRTNEVNSNVSLVASHREVREGMTAMQQELAKSKNAVLDGRDIGTHVLPDANVKVFLTASVEERARRRHLEQLEKGLPSDFEQLKKDIAKRDELDSTRAIAPLKQAADAQVVDTTSMGIDEVVETILDLVKEHSRQ.

11 to 19 provides a ligand contact to ATP; the sequence is GPAGAGKST.

It belongs to the cytidylate kinase family. Type 1 subfamily.

Its subcellular location is the cytoplasm. The enzyme catalyses CMP + ATP = CDP + ADP. It carries out the reaction dCMP + ATP = dCDP + ADP. The chain is Cytidylate kinase from Shouchella clausii (strain KSM-K16) (Alkalihalobacillus clausii).